A 469-amino-acid polypeptide reads, in one-letter code: MESLNGCVLSQLRQSGAQLTRTLQKVQSRSYSAPVSGSIPAAKKKYVPTSGTYPLGFSASGINVGVKPKNTTKPDVCLVASDRPCAAAAVFTKNKFQAAPVTFSRSLLQKKGNQGIQGVVVNSGCANAVTGKGGLEDAGKMAQAADECFGQSESTLVMSTGVIGQRLPIEKITSNIPRAHKAMGSSHDHWLTAAKAICTTDTFPKLISRSFKLPSSPSVEYRIAGMTKGAGMIHPNMATLLGIIATDAPVSSTVLPAVLKHAVDRSFNSITIDGDTSTNDTVALLANGAAGGKEVVANTPDYDAFQTVLTDFSTDLAKLIVRDGEGATKFVTIRVVEAASEEAARKIASTIARSPLVKTALYGKDANWGRILCATGYSLVSEPGLPVNDIPEVVPEKTNVSFIPTDGTAELKLLVNGEPEQVDEARAAEILELEDLEILVRLGTGDKQATYWTCDYSHEYITINGDYRT.

Residues T199, K228, T239, E325, N464, and T469 each contribute to the substrate site. The active-site Nucleophile is the T239.

It belongs to the ArgJ family. As to quaternary structure, heterodimer of an alpha and a beta chain. The alpha and beta chains are autoproteolytically processed from a single precursor protein within the mitochondrion.

Its subcellular location is the mitochondrion matrix. It carries out the reaction N(2)-acetyl-L-ornithine + L-glutamate = N-acetyl-L-glutamate + L-ornithine. It catalyses the reaction L-glutamate + acetyl-CoA = N-acetyl-L-glutamate + CoA + H(+). The protein operates within amino-acid biosynthesis; L-arginine biosynthesis; L-ornithine and N-acetyl-L-glutamate from L-glutamate and N(2)-acetyl-L-ornithine (cyclic): step 1/1. It participates in amino-acid biosynthesis; L-arginine biosynthesis; N(2)-acetyl-L-ornithine from L-glutamate: step 1/4. Its function is as follows. Catalyzes two activities which are involved in the cyclic version of arginine biosynthesis: the synthesis of acetylglutamate from glutamate and acetyl-CoA, and of ornithine by transacetylation between acetylornithine and glutamate. This Sordaria macrospora (strain ATCC MYA-333 / DSM 997 / K(L3346) / K-hell) protein is Arginine biosynthesis bifunctional protein ArgJ, mitochondrial.